The following is a 100-amino-acid chain: uncharacterized protein (100 aa).

The signal sequence occupies residues 1-18 (MWGFLVLKARWLVTPVRT). Residues 48–86 (LTRGVIRVSPQERSQQNQSAPKGPTPSTRPKPRTLGPQA) form a disordered region. Residues 58-69 (QERSQQNQSAPK) are compositionally biased toward polar residues. Asn-64 carries N-linked (GlcNAc...) asparagine glycosylation.

The protein resides in the secreted. This is an uncharacterized protein from Homo sapiens (Human).